A 344-amino-acid polypeptide reads, in one-letter code: Biotin synthase (344 aa).

The Radical SAM core domain maps to 65-290 (PEVEVEGIIS…RTMLRFAGGR (226 aa)). The [4Fe-4S] cluster site is built by C80, C84, and C87. The [2Fe-2S] cluster site is built by C123, C156, C215, and R285.

This sequence belongs to the radical SAM superfamily. Biotin synthase family. In terms of assembly, homodimer. The cofactor is [4Fe-4S] cluster. [2Fe-2S] cluster is required as a cofactor.

The enzyme catalyses (4R,5S)-dethiobiotin + (sulfur carrier)-SH + 2 reduced [2Fe-2S]-[ferredoxin] + 2 S-adenosyl-L-methionine = (sulfur carrier)-H + biotin + 2 5'-deoxyadenosine + 2 L-methionine + 2 oxidized [2Fe-2S]-[ferredoxin]. It participates in cofactor biosynthesis; biotin biosynthesis; biotin from 7,8-diaminononanoate: step 2/2. In terms of biological role, catalyzes the conversion of dethiobiotin (DTB) to biotin by the insertion of a sulfur atom into dethiobiotin via a radical-based mechanism. The chain is Biotin synthase from Mycolicibacterium paratuberculosis (strain ATCC BAA-968 / K-10) (Mycobacterium paratuberculosis).